The following is a 170-amino-acid chain: Protein ripply3 (170 aa).

Positions 40–43 (WRPW) match the WRPW motif motif. The interval 79 to 114 (HPVRLYMPKSKTSEYLQHMGKKVLANFPVQATIHFY) is ripply homology domain. Polar residues predominate over residues 143-152 (VNSSRGSGDN). The interval 143 to 170 (VNSSRGSGDNYSVPGGPKRNISSHTGSA) is disordered.

This sequence belongs to the ripply family. Interacts with tbx1 and tle4/grg4.

It is found in the nucleus. Acts as a transcriptional corepressor. Negative regulator of the transcriptional activity of tbx1 that plays a key role in pharyngeal development. Plays a role in the formation of the anteroposterior (AP) axis during embryonic development; required to establish the posterolateral border of the pre-placodal ectoderm (PPE) acting downstream of the retinoic acid receptor (RAR) signaling. The chain is Protein ripply3 from Xenopus tropicalis (Western clawed frog).